The primary structure comprises 376 residues: Formate dehydrogenase 2 (376 aa).

The substrate site is built by Val-97 and Asn-121. Residues 176-177 (RI), Asp-197, 244-248 (PLHKD), Thr-270, Asp-296, and 325-328 (HISG) contribute to the NAD(+) site.

It belongs to the D-isomer specific 2-hydroxyacid dehydrogenase family. FDH subfamily. In terms of assembly, homodimer.

The protein resides in the cytoplasm. It carries out the reaction formate + NAD(+) = CO2 + NADH. In terms of biological role, catalyzes the NAD(+)-dependent oxidation of formate to carbon dioxide. Formate oxidation is the final step in the methanol oxidation pathway in methylotrophic microorganisms. Has a role in the detoxification of exogenous formate in non-methylotrophic organisms. This is Formate dehydrogenase 2 (FDH2) from Saccharomyces cerevisiae (strain CEN.PK113-7D) (Baker's yeast).